The sequence spans 344 residues: Arginine N-succinyltransferase (344 aa).

Leu125 is a succinyl-CoA binding site. The active-site Proton donor is His229.

The protein belongs to the arginine N-succinyltransferase family.

It catalyses the reaction succinyl-CoA + L-arginine = N(2)-succinyl-L-arginine + CoA + H(+). It functions in the pathway amino-acid degradation; L-arginine degradation via AST pathway; L-glutamate and succinate from L-arginine: step 1/5. Functionally, catalyzes the transfer of succinyl-CoA to arginine to produce N(2)-succinylarginine. The chain is Arginine N-succinyltransferase from Salmonella arizonae (strain ATCC BAA-731 / CDC346-86 / RSK2980).